The following is a 408-amino-acid chain: Imidazolonepropionase (408 aa).

Residues His-73 and His-75 each coordinate Fe(3+). His-73 and His-75 together coordinate Zn(2+). Arg-82, Tyr-145, and His-178 together coordinate 4-imidazolone-5-propanoate. An N-formimidoyl-L-glutamate-binding site is contributed by Tyr-145. Position 243 (His-243) interacts with Fe(3+). His-243 contributes to the Zn(2+) binding site. Residue Gln-246 participates in 4-imidazolone-5-propanoate binding. Asp-318 is a binding site for Fe(3+). Asp-318 serves as a coordination point for Zn(2+). Asn-320 and Gly-322 together coordinate N-formimidoyl-L-glutamate. Ser-323 contributes to the 4-imidazolone-5-propanoate binding site.

The protein belongs to the metallo-dependent hydrolases superfamily. HutI family. Requires Zn(2+) as cofactor. It depends on Fe(3+) as a cofactor.

It is found in the cytoplasm. The enzyme catalyses 4-imidazolone-5-propanoate + H2O = N-formimidoyl-L-glutamate. Its pathway is amino-acid degradation; L-histidine degradation into L-glutamate; N-formimidoyl-L-glutamate from L-histidine: step 3/3. Functionally, catalyzes the hydrolytic cleavage of the carbon-nitrogen bond in imidazolone-5-propanoate to yield N-formimidoyl-L-glutamate. It is the third step in the universal histidine degradation pathway. The protein is Imidazolonepropionase of Shewanella baltica (strain OS185).